The following is a 710-amino-acid chain: Dendrin (710 aa).

Disordered regions lie at residues 1–22, 62–195, 213–274, and 324–375; these read MLDGPLFSEGPDSPRELQDEES, WARG…PWGG, AGTA…KRLD, and GLNS…GKEG. Positions 103 to 134 form a coiled coil; the sequence is AEVRAREQEKRKAASQEREAKETERKRRKAGG. Residues 105 to 127 are compositionally biased toward basic and acidic residues; the sequence is VRAREQEKRKAASQEREAKETER. The interval 113–131 is nuclear localization; the sequence is RKAASQEREAKETERKRRK. The interaction with MAGI2 stretch occupies residues 186-236; it reads GVAWAGPWGGRRPGPPSYEAHLLLRGSAGTAPRRRWDRPPPYVAPPSYEGP. The segment covering 265 to 274 has biased composition (basic and acidic residues); the sequence is EGGRTKKRLD. The segment at 341–435 is interaction with ACTN1; sequence PGTDAALSRS…LEVWKVTRRA (95 aa). Basic residues predominate over residues 360 to 370; it reads PRSRQHLRGSR. The residue at position 388 (Ser-388) is a Phosphoserine. 3 disordered regions span residues 390–422, 469–508, and 521–710; these read KKPPVRHSQTLPRPWAPGGTGWKESLGQREGAE, PRTQQGQLVPSGESCSVSDSLSQPKPCHEEEGEGAAANPS, and NQPS…RERE. Positions 407–708 are interaction with CD2AP and NPHS1; sequence GGTGWKESLG…TRKTPQGNRE (302 aa). A compositionally biased stretch (polar residues) spans 469-491; it reads PRTQQGQLVPSGESCSVSDSLSQ. Residues 693–710 show a composition bias toward basic and acidic residues; sequence GFIREDTRKTPQGNRERE.

Forms a ternary complex with MAGI2 and SH3KBP1; recruits DDN to the cytoplasm. Interacts with MAGI1. Interacts with ACTN1 and may interact with WWC1. Interacts with the podocyte slit diaphragm proteins CD2AP, NPHS1 and NPHS2; the interaction with CD2AP and NPHS1 is direct. In terms of tissue distribution, two forms of 81 kDa and 89 kDa are expressed in brain. The 81 kDa form is the only one found in kidney podocytes.

It is found in the cell projection. The protein resides in the dendritic spine membrane. It localises to the cytoplasm. Its subcellular location is the endoplasmic reticulum membrane. The protein localises to the perikaryon. It is found in the nucleus. Its function is as follows. Promotes apoptosis of kidney glomerular podocytes. Podocytes are highly specialized cells essential to the ultrafiltration of blood, resulting in the extraction of urine and the retention of protein. The polypeptide is Dendrin (Ddn) (Mus musculus (Mouse)).